The primary structure comprises 330 residues: Mucin-15 (330 aa).

An N-terminal signal peptide occupies residues 1-23 (MLTSAKILLISILSSLLLFGSHG). The disordered stretch occupies residues 23-115 (GEEGQKTNTT…SPRSPSTHSF (93 aa)). At 24 to 232 (EEGQKTNTTE…SDPQEENRNT (209 aa)) the chain is on the extracellular side. Residues asparagine 30, asparagine 44, asparagine 54, asparagine 71, asparagine 79, asparagine 89, asparagine 94, asparagine 122, asparagine 138, asparagine 147, asparagine 154, asparagine 162, asparagine 175, asparagine 214, and asparagine 221 are each glycosylated (N-linked (GlcNAc...) asparagine). Residues 42–56 (MENQSVPLESKANLT) are compositionally biased toward polar residues. Polar residues predominate over residues 86–115 (FYSNLSTDNSSRSPSLMPTLSPRSPSTHSF). The tract at residues 164–185 (SITVSNLPSGPNTTSVTPMVTE) is disordered. The chain crosses the membrane as a helical span at residues 233–253 (GVVFGAILGAILGASLLSLVG). Residues 254–330 (YLLCGKRKTD…DDIPPLRTSV (77 aa)) lie on the Cytoplasmic side of the membrane. Positions 279-330 (LRLDNAPEPYDMSFGNSSYYNPTANDSSTSAGGENAHDSIPMDDIPPLRTSV) are disordered. The segment covering 292-310 (FGNSSYYNPTANDSSTSAG) has biased composition (polar residues).

Highly glycosylated (N- and O-linked carbohydrates). In terms of tissue distribution, mainly expressed on apical surfaces of the mammary epithelial cells.

The protein localises to the cell membrane. It is found in the secreted. This chain is Mucin-15 (MUC15), found in Bos taurus (Bovine).